Reading from the N-terminus, the 119-residue chain is Large ribosomal subunit protein bL20 (119 aa).

It belongs to the bacterial ribosomal protein bL20 family.

Its function is as follows. Binds directly to 23S ribosomal RNA and is necessary for the in vitro assembly process of the 50S ribosomal subunit. It is not involved in the protein synthesizing functions of that subunit. This chain is Large ribosomal subunit protein bL20, found in Alcanivorax borkumensis (strain ATCC 700651 / DSM 11573 / NCIMB 13689 / SK2).